Consider the following 149-residue polypeptide: MQVILLDKIGNLGSLGDQVNVKAGYARNFLIPQGKAVMATKANVEMFETRRAELEANVAKQLAAAEARAEKVNALEVTIASKSGDEGKLFGSIGTRDIAEAATAAGVEIAKSEVRLPEGALRTTGSFEVSIQLHSEVFATLKLEVVAAE.

Belongs to the bacterial ribosomal protein bL9 family.

Its function is as follows. Binds to the 23S rRNA. The polypeptide is Large ribosomal subunit protein bL9 (Aliivibrio fischeri (strain ATCC 700601 / ES114) (Vibrio fischeri)).